The following is a 394-amino-acid chain: Venom metalloproteinase antarease-like TtrivMP_A (394 aa).

An N-terminal signal peptide occupies residues 1–16 (MISYLASIFLLATVSA). Positions 17-158 (VPSGRVEVVF…AENVSRMAEE (142 aa)) are excised as a propeptide. N-linked (GlcNAc...) asparagine glycosylation occurs at asparagine 151. Residues 162–390 (IVVEYYIVTD…KPTAFCIFEQ (229 aa)) form the Peptidase M12B domain. Cysteine 295 and cysteine 386 are joined by a disulfide. Zn(2+) is bound at residue histidine 319. Glutamate 320 is an active-site residue. Residues histidine 323 and histidine 329 each contribute to the Zn(2+) site.

This sequence belongs to the venom metalloproteinase (M12B) family. The cofactor is Zn(2+). In terms of tissue distribution, expressed by the venom gland.

The protein localises to the secreted. Inhibited by EDTA. Acts as a metalloprotease. Penetrates intact tissue and specifically cleaves the vesicle-associated membrane protein 2 (VAMP2) (part of the SNARE complex) involved in pancreatic secretion, thus disrupting the normal vesicular traffic. This is Venom metalloproteinase antarease-like TtrivMP_A from Tityus trivittatus (Argentinean scorpion).